The sequence spans 393 residues: Cytohesin-4 (393 aa).

Residues 13-56 (SGEAKELQQIKWHRKQLLEDIQKLKDEIADVFAQIDCFESTEES) adopt a coiled-coil conformation. The SEC7 domain occupies 54–241 (EESRMAQKEK…RNLFDSIKSE (188 aa)). The PH domain maps to 259-375 (NPDREGWLLK…WIEAIRASIT (117 aa)). A 1,2-diacyl-sn-glycero-3-phospho-(1D-myo-inositol-3,4,5-trisphosphate) contacts are provided by residues 268 to 275 (KLGGRVKT), Arg279, Tyr290, and Arg300. The tract at residues 386-393 (RKKKIVGK) is C-terminal autoinhibitory region.

It localises to the cell membrane. Its function is as follows. Promotes guanine-nucleotide exchange on ARF1 and ARF5. Promotes the activation of ARF factors through replacement of GDP with GTP. The polypeptide is Cytohesin-4 (Cyth4) (Mus musculus (Mouse)).